We begin with the raw amino-acid sequence, 203 residues long: Glycerol-3-phosphate acyltransferase (203 aa).

6 helical membrane passes run 5–25, 50–70, 72–92, 115–135, 140–160, and 162–182; these read IASI…FSLL, TCGF…GALP, IAAQ…TAAM, VVLT…AVTF, ISAV…AVLL, and LGML…AIVF.

It belongs to the PlsY family. In terms of assembly, probably interacts with PlsX.

The protein localises to the cell membrane. The catalysed reaction is an acyl phosphate + sn-glycerol 3-phosphate = a 1-acyl-sn-glycero-3-phosphate + phosphate. It participates in lipid metabolism; phospholipid metabolism. Functionally, catalyzes the transfer of an acyl group from acyl-phosphate (acyl-PO(4)) to glycerol-3-phosphate (G3P) to form lysophosphatidic acid (LPA). This enzyme utilizes acyl-phosphate as fatty acyl donor, but not acyl-CoA or acyl-ACP. This Roseiflexus sp. (strain RS-1) protein is Glycerol-3-phosphate acyltransferase.